Here is a 1018-residue protein sequence, read N- to C-terminus: Ubiquitin carboxyl-terminal hydrolase 35 (1018 aa).

The region spanning 441–926 (IGLINLGNTC…TAYVLFYRQR (486 aa)) is the USP domain. C450 (nucleophile) is an active-site residue. 2 disordered regions span residues 544 to 566 (QKLK…STSV) and 610 to 757 (RLGS…GSEG). The span at 552-561 (PSPPEEPPAP) shows a compositional bias: pro residues. The residue at position 613 (S613) is a Phosphoserine. Basic and acidic residues-rich tracts occupy residues 673-691 (QEER…TEKE), 699-709 (STRGEGEREKE), and 718-728 (KVEKETEKEAE). Residue H862 is the Proton acceptor of the active site. Residues 984–1011 (HWGRGFDEDKDEDEGSPGGCNPAGGNGG) form a disordered region. Gly residues predominate over residues 999 to 1011 (SPGGCNPAGGNGG).

It belongs to the peptidase C19 family. As to quaternary structure, homodimer (via C-terminal region). Interacts with HSP90AA1. Post-translationally, ubiquitinated by CHIP/STUB1 in an HSP90-dependent manner; leading to proteasomal degradation. This ubiquitination can be reversed through auto-deubiquitinating activity. Expressed in testis, pancreas and skeletal muscle.

Its subcellular location is the cytoplasm. The protein resides in the mitochondrion. The enzyme catalyses Thiol-dependent hydrolysis of ester, thioester, amide, peptide and isopeptide bonds formed by the C-terminal Gly of ubiquitin (a 76-residue protein attached to proteins as an intracellular targeting signal).. Deubiquitinase that plays a role in different processes including cell cycle regulation, mitophagy or endoplasmic reticulum stress. Inhibits TNFalpha-induced NF-kappa-B activation through stabilizing TNIP2 protein via deubiquitination. Plays an essential role during mitosis by deubiquitinating and thereby regulating the levels of Aurora B/AURKB protein. In addition, regulates the protein levels of other key component of the chromosomal passenger complex (CPC) such as survivin/BIRC5 or Borealin/CDCA8 by enhancing their stability. Regulates the degradation of mitochondria through the process of autophagy termed mitophagy. This Homo sapiens (Human) protein is Ubiquitin carboxyl-terminal hydrolase 35 (USP35).